We begin with the raw amino-acid sequence, 318 residues long: Olfactory receptor 51E1 (318 aa).

Residues 1 to 31 (MMVDPNGNESSATYFILIGLPGLEEAQFWLA) are Extracellular-facing. Residue asparagine 8 is glycosylated (N-linked (GlcNAc...) asparagine). Residues 32–52 (FPLCSLYLIAVLGNLTIIYIV) form a helical membrane-spanning segment. Residues 53–60 (RTEHSLHE) lie on the Cytoplasmic side of the membrane. The helical transmembrane segment at 61–81 (PMYIFLCMLSGIDILISTSSM) threads the bilayer. Residues 82–100 (PKMLAIFWFNSTTIQFDAC) lie on the Extracellular side of the membrane. Asparagine 91 carries N-linked (GlcNAc...) asparagine glycosylation. A disulfide bond links cysteine 100 and cysteine 182. A helical transmembrane segment spans residues 101–123 (LLQMFAIHSLSGMESTVLLAMAF). Over 124 to 145 (DRYVAICHPLRHATVLTLPRVT) the chain is Cytoplasmic. Residues 146–166 (KIGVAAVVRGAALMAPLPVFI) traverse the membrane as a helical segment. At 167–198 (KQLPFCRSNILSHSYCLHQDVMKLACDDIRVN) the chain is on the extracellular side. The chain crosses the membrane as a helical span at residues 199–219 (VVYGLIVIISAIGLDSLLISF). The Cytoplasmic portion of the chain corresponds to 220 to 239 (SYLLILKTVLGLTREAQAKA). A helical membrane pass occupies residues 240 to 260 (FGTCVSHVCAVFIFYVPFIGL). The Extracellular portion of the chain corresponds to 261 to 275 (SMVHRFSKRRDSPLP). A helical transmembrane segment spans residues 276–296 (VILANIYLLVPPVLNPIVYGV). Residues 297 to 318 (KTKEIRQRILRLFHVATHASEP) are Cytoplasmic-facing.

It belongs to the G-protein coupled receptor 1 family. As to expression, highly expressed in prostate. Very low levels may be detected in some other tissues, such as placenta, skeletal muscle, heart, ovary and testis. Up-regulated in prostate cancers.

The protein localises to the cell membrane. In terms of biological role, odorant receptor. The chain is Olfactory receptor 51E1 (OR51E1) from Homo sapiens (Human).